We begin with the raw amino-acid sequence, 624 residues long: MYKEKDFDIIVVGAGHAGCEAALATAKMGLQTALFTIYLETIAQLSCNPAIGGLAKGHLVREIDALGGIMAKVTDMAGIQFRMLNRSKGPAVWSLRAQADRILYNIYMRKILESTENLAIKQAMVEEIVVENGKVKGIITSLGVFYGAKAVIITPGTFLNGLIHIGLDSFEAGRAGEFPSKKLSESIKKLGLKMGRLKTGTPPRIDAKTIDFSKTEEQGGDDPPIPFSYSTKKINNPQVPCYITYTNEKTHEIILNNLDRSPLYSGKIKGIGPRYCPSIEDKVVKFRDKSRHQIFLEPEGLSRKEYYANGIPTSLPYDVQVAFVRTIPGLEDAEIMRPGYAIEYDFVYPTQIRHTLEVKGIEGLYLAGQINGTSGYEEAAAQGLMAGINAALKIKKQPPLILGRDEAYIGVLIDDLVTKGTQEPYRMFTSRAEFRLLLRHDNADLRLRDYGYKIGLVDEETYEEFNKKKELLQREIKRLKTTTIKPSEELNKALIEAQTTPVEEATFLDKLLKRPELNYDFIKKFAPSEVTLTKELEELVEIHIKYEGYIAKQMELVERMKQFEEKLIPENFDFNIPGLSREVIQKLTEVAPRTIGQAMRIPGVTPAAISILMVAVQKKTTVKK.

Residues Gly13–Gly18, Val125, and Ser180 contribute to the FAD site. Gly272–Phe286 is a binding site for NAD(+). Gln369 provides a ligand contact to FAD.

This sequence belongs to the MnmG family. Homodimer. Heterotetramer of two MnmE and two MnmG subunits. FAD serves as cofactor.

Its subcellular location is the cytoplasm. NAD-binding protein involved in the addition of a carboxymethylaminomethyl (cmnm) group at the wobble position (U34) of certain tRNAs, forming tRNA-cmnm(5)s(2)U34. The sequence is that of tRNA uridine 5-carboxymethylaminomethyl modification enzyme MnmG from Thermodesulfovibrio yellowstonii (strain ATCC 51303 / DSM 11347 / YP87).